A 470-amino-acid polypeptide reads, in one-letter code: Peripherin (470 aa).

The interval 1–99 (MSHHPSGLRA…FLATRSNEKQ (99 aa)) is head. Tyrosine 17 carries the 3'-nitrotyrosine modification. Phosphoserine is present on residues serine 28, serine 50, and serine 59. The 311-residue stretch at 97–407 (EKQELQELND…KLLEGEESRI (311 aa)) folds into the IF rod domain. Residues 100–132 (ELQELNDRFANFIEKVRFLEQQNAALRGELSQA) form a coil 1A region. The linker 1 stretch occupies residues 133-143 (RGQEPARADQL). Residues 144 to 239 (CQQELRELRR…KLHEEELRDL (96 aa)) are coil 1B. The tract at residues 240–262 (QVSVESQQVQQVEVEATVKPELT) is linker 2. The segment at 263–405 (AALRDIRAQY…YRKLLEGEES (143 aa)) is coil 2. Tyrosine 379 is subject to 3'-nitrotyrosine. Residues 406–470 (RISVPVHSFA…ELDKSSAHSY (65 aa)) form a tail region. The interval 447-470 (NGEVVTESQKEQRSELDKSSAHSY) is disordered. A compositionally biased stretch (basic and acidic residues) spans 454-470 (SQKEQRSELDKSSAHSY). Position 470 is a phosphotyrosine (tyrosine 470).

This sequence belongs to the intermediate filament family. In terms of assembly, forms homodimers (in vitro). Homopolymerizes into a filamentous network (in vitro). Forms heterodimers with NEFL, NEFM or NEFH (in vitro). Interacts with DST (via C-terminus). Interacts with RAB7A; the interaction is direct. Interacts with PRKCE (via phorbol-ester/DAG-type 2 domain). Phosphorylated; phosphorylation increases after nerve injury in regenerating neurons. In terms of tissue distribution, expressed in the neurons of the outer hair cells in the organ of Corti and to a lesser extent in type I spiral ganglion cells.

Its subcellular location is the cytoplasm. The protein localises to the cytoskeleton. It is found in the cell projection. It localises to the axon. The protein resides in the perikaryon. Class-III neuronal intermediate filament protein. May form an independent structural network without the involvement of other neurofilaments or may cooperate with the neuronal intermediate filament proteins NEFL, NEFH, NEFM and INA to form a filamentous network. Assembly of the neuronal intermediate filaments may be regulated by RAB7A. Plays a role in the development of unmyelinated sensory neurons. May be involved in axon elongation and axon regeneration after injury. Inhibits neurite extension in type II spiral ganglion neurons in the cochlea. This chain is Peripherin (PRPH), found in Homo sapiens (Human).